Reading from the N-terminus, the 464-residue chain is MARESCASETVSAAAVLFAWGANSYGQLGLGHKEDVFLPQQLSDFCQAGCIKSVTGGGGHSAVVTDGGDLFVCGLNKDGQLGLGHTEEVLRFTICKPLRGCPIRQVACGWDFTIMLTEKGQVLSCGSNAFGQLGVPHGPRKCVVPQAIECLREKVVCVAAGLRHALATTATGSVFQWGTGLASSGRRLCPGQNLPLFLTAKEPSRVTGLENSTAVCAVAGSDHSASLTDTGELYVWGRNKHGQLASRAVFLPLPQRIEAHYFQDEKVTAVWSGWTHLVAKTETGKVFTWGRADYGQLGRRLEPPEAQKPVEQDSSLAFQGPQNSVPSPLHCLTGATEISCGSEHNLAVIRDKCCSWGWNEHGMCGDGTESNVWTPTPVQALPPSPSRLLLVGCGAGHSLAVCQLPAHPVPCQDLKVTCPLPDDTENTESQGAVDRDRLEGETISDLNPDRTRNGGGGCESETVQ.

RCC1 repeat units lie at residues 15–67, 68–119, 120–171, 172–230, 231–283, 284–351, and 352–402; these read AVLF…VTDG, GDLF…LTEK, GQVL…TTAT, GSVF…LTDT, GELY…KTET, GKVF…VIRD, and KCCS…LAVC. Residues 422–464 are disordered; it reads DDTENTESQGAVDRDRLEGETISDLNPDRTRNGGGGCESETVQ. Position 429 is a phosphoserine (serine 429).

In terms of assembly, interacts with SEC5. The interaction occurs only in the presence of magnesium or manganese and is stimulated by dCTP or GTP.

The protein localises to the cytoplasm. The protein resides in the nucleus. Its function is as follows. Probable guanine nucleotide exchange factor (GEF), which may be involved in the secretion process. The sequence is that of Secretion-regulating guanine nucleotide exchange factor (Sergef) from Mus musculus (Mouse).